A 231-amino-acid polypeptide reads, in one-letter code: NADH-ubiquinone oxidoreductase chain 4 (231 aa).

6 consecutive transmembrane segments (helical) span residues 1–21 (PIAG…YGII), 34–54 (MFLP…LTCL), 63–85 (IAYS…TPWG), 89–111 (AMAL…NTTY), 128–148 (ILPM…ATPP), and 156–176 (LLIM…LGLS).

The protein belongs to the complex I subunit 4 family.

Its subcellular location is the mitochondrion membrane. The enzyme catalyses a ubiquinone + NADH + 5 H(+)(in) = a ubiquinol + NAD(+) + 4 H(+)(out). In terms of biological role, core subunit of the mitochondrial membrane respiratory chain NADH dehydrogenase (Complex I) that is believed to belong to the minimal assembly required for catalysis. Complex I functions in the transfer of electrons from NADH to the respiratory chain. The immediate electron acceptor for the enzyme is believed to be ubiquinone. This chain is NADH-ubiquinone oxidoreductase chain 4 (MT-ND4), found in Trimeresurus stejnegeri (Chinese green tree viper).